The primary structure comprises 272 residues: Golgi to ER traffic protein 5 (272 aa).

Disordered stretches follow at residues 1–35 (MSTVDQSTVTTALSSSSSNRHQGNDTYSIPKHSGT) and 85–105 (LHAPHPEMPKKTKQPLAPGSS). One can recognise a Ubiquitin-like domain in the interval 108 to 198 (ITVHLKSARN…VEFGVMIIGG (91 aa)). The disordered stretch occupies residues 212-231 (SAEQKESYEPPKPAVGPSGE).

The protein belongs to the GET5 family. Forms homodimers via its C-terminal domain. Component of the get4/get5/sgt2 sorting complex. Binds directly sgt12 homodimers.

The protein localises to the cytoplasm. In terms of biological role, component of the get4/get5/sgt2 sorting complex involved in the GET (guided entry of TA proteins) pathway that leads to the insertion of tail-anchored (TA) proteins into the endoplasmic reticulum. Get4 and get5 form an obligate complex that catalyzes the transfer of tail-anchored proteins destined to the endoplasmic reticulum from sgt2 to the cytosolic targeting factor which then targets the TA protein to the ER membrane via get1/get2. In Aspergillus fumigatus (strain ATCC MYA-4609 / CBS 101355 / FGSC A1100 / Af293) (Neosartorya fumigata), this protein is Golgi to ER traffic protein 5.